The sequence spans 555 residues: Potassium-transporting ATPase potassium-binding subunit (555 aa).

10 consecutive transmembrane segments (helical) span residues 2 to 22 (IWVA…PTGI), 60 to 80 (QYAL…YFIF), 130 to 150 (IGIT…VMAF), 173 to 193 (VFLP…VPQT), 246 to 266 (MSNI…PFTY), 278 to 298 (ILFV…TTSE), 374 to 394 (AGFV…GLMV), 412 to 432 (LIAV…ALAL), 483 to 503 (LVMF…AASL), and 525 to 545 (GIFI…MLVL).

The protein belongs to the KdpA family. The system is composed of three essential subunits: KdpA, KdpB and KdpC.

Its subcellular location is the cell membrane. Part of the high-affinity ATP-driven potassium transport (or Kdp) system, which catalyzes the hydrolysis of ATP coupled with the electrogenic transport of potassium into the cytoplasm. This subunit binds the extracellular potassium ions and delivers the ions to the membrane domain of KdpB through an intramembrane tunnel. The sequence is that of Potassium-transporting ATPase potassium-binding subunit from Bacillus cereus (strain Q1).